A 466-amino-acid polypeptide reads, in one-letter code: Asparagine--tRNA ligase (466 aa).

This sequence belongs to the class-II aminoacyl-tRNA synthetase family. In terms of assembly, homodimer.

It localises to the cytoplasm. It catalyses the reaction tRNA(Asn) + L-asparagine + ATP = L-asparaginyl-tRNA(Asn) + AMP + diphosphate + H(+). The chain is Asparagine--tRNA ligase from Salmonella choleraesuis (strain SC-B67).